We begin with the raw amino-acid sequence, 115 residues long: UPF0738 protein SAV1005 (115 aa).

The protein belongs to the UPF0738 family.

The protein is UPF0738 protein SAV1005 of Staphylococcus aureus (strain Mu50 / ATCC 700699).